We begin with the raw amino-acid sequence, 61 residues long: Large ribosomal subunit protein uL30 (61 aa).

The protein belongs to the universal ribosomal protein uL30 family. In terms of assembly, part of the 50S ribosomal subunit.

This Francisella philomiragia subsp. philomiragia (strain ATCC 25017 / CCUG 19701 / FSC 153 / O#319-036) protein is Large ribosomal subunit protein uL30.